Here is a 588-residue protein sequence, read N- to C-terminus: Solute carrier family 2, facilitated glucose transporter member 12 (588 aa).

At 1–28 (MLAHSTAQDLILQQRSSDDHPQTNPRQT) the chain is on the cytoplasmic side. A helical membrane pass occupies residues 29-49 (GCGAFIILSSVIAAISGLLVG). Over 50 to 74 (YELGIISGALLQLQSLLELTCQQQE) the chain is Extracellular. The helical transmembrane segment at 75–95 (IVVSALLIGALVASLVGGCLI) threads the bilayer. Topologically, residues 96–103 (DLYGRRTT) are cytoplasmic. Residues 104–124 (IIFTSILLVFANLLPVVVVSY) form a helical membrane-spanning segment. The Extracellular portion of the chain corresponds to 125-131 (GSLIAGR). Residues 132 to 152 (IFIGVSISLSAIATCVYIAEL) traverse the membrane as a helical segment. At 153–158 (SPQDKR) the chain is on the cytoplasmic side. A helical membrane pass occupies residues 159–179 (GMLVSLNELMIVAGILLAYIC). The Extracellular segment spans residues 180-191 (NYLFASVNNGWK). The chain crosses the membrane as a helical span at residues 192 to 212 (YMFGLITPLAALQAVAMFFLP). The Cytoplasmic portion of the chain corresponds to 213 to 272 (RSPRFLIMKGYDDAAGKVLQKLRATTDINEELTAIKSSIKAEYQYKFLDLFCSRDNMRAR). Residues 273–293 (LLIGLTLSFFVQITGQPNILF) traverse the membrane as a helical segment. Over 294–311 (YASTVLKSVGFQSTEAAS) the chain is Extracellular. A helical membrane pass occupies residues 312–332 (LASTGIGVVKVVSTIPAIFLV). The Cytoplasmic portion of the chain corresponds to 333 to 339 (DKIGSKT). The helical transmembrane segment at 340–360 (FLCIGSAVMAVSLVSVGLVSL) threads the bilayer. The Extracellular segment spans residues 361–459 (QLDVNYNNIC…IPEYMKWLCL (99 aa)). N-linked (GlcNAc...) asparagine glycosylation is found at Asn377, Asn395, and Asn419. A helical transmembrane segment spans residues 460 to 480 (SSLLAFVAAFSIGLGPMAWLV). Topologically, residues 481 to 492 (QSEIFPAGIKGR) are cytoplasmic. A helical transmembrane segment spans residues 493 to 513 (AFAITSSMNWGMNLLISLTFL). Over 514–522 (TLTEMIGLP) the chain is Extracellular. A helical membrane pass occupies residues 523–543 (WMLFGYALMSIASLVFVIMFV). Residues 544–588 (PNTKGRPLEEISKELANRSYMCNAVCHRRRSKKKLTPVALIQSPA) are Cytoplasmic-facing.

Belongs to the major facilitator superfamily. Sugar transporter (TC 2.A.1.1) family. Glucose transporter subfamily.

The protein resides in the cell membrane. It localises to the endomembrane system. Its subcellular location is the cytoplasm. It is found in the perinuclear region. It carries out the reaction D-glucose(out) = D-glucose(in). Its function is as follows. Insulin-regulated facilitative glucose transporter. In Xenopus laevis (African clawed frog), this protein is Solute carrier family 2, facilitated glucose transporter member 12.